The primary structure comprises 351 residues: Molybdate-binding protein MolA (351 aa).

An N-terminal signal peptide occupies residues 1–21 (MKLKSLLIACLLSSLSFSALA). The 282-residue stretch at 41–322 (RAVVLQHQTL…WLAKALYPQR (282 aa)) folds into the Fe/B12 periplasmic-binding domain. Molybdate contacts are provided by residues 47-48 (HQ), Y217, R264, and 300-301 (GY).

This sequence belongs to the bacterial solute-binding protein 8 family. As to quaternary structure, the complex is composed of two ATP-binding proteins (MolC), two transmembrane proteins (MolB) and a solute-binding protein (MolA).

The protein resides in the periplasm. Its activity is regulated as follows. The MolBCA complex shows a decrease in affinity in the presence of increasing concentrations of substrate and nucleotide. Its function is as follows. Part of the ABC transporter complex MolBCA involved in molybdate import. Functions as a low-affinity molybdate transporter. Binds to both molybdate and tungstate, but not to sulfate or phosphate. In Haemophilus influenzae (strain ATCC 51907 / DSM 11121 / KW20 / Rd), this protein is Molybdate-binding protein MolA.